The primary structure comprises 183 residues: ATP synthase subunit delta (183 aa).

This sequence belongs to the ATPase delta chain family. F-type ATPases have 2 components, F(1) - the catalytic core - and F(0) - the membrane proton channel. F(1) has five subunits: alpha(3), beta(3), gamma(1), delta(1), epsilon(1). F(0) has three main subunits: a(1), b(2) and c(10-14). The alpha and beta chains form an alternating ring which encloses part of the gamma chain. F(1) is attached to F(0) by a central stalk formed by the gamma and epsilon chains, while a peripheral stalk is formed by the delta and b chains.

It localises to the cell inner membrane. Its function is as follows. F(1)F(0) ATP synthase produces ATP from ADP in the presence of a proton or sodium gradient. F-type ATPases consist of two structural domains, F(1) containing the extramembraneous catalytic core and F(0) containing the membrane proton channel, linked together by a central stalk and a peripheral stalk. During catalysis, ATP synthesis in the catalytic domain of F(1) is coupled via a rotary mechanism of the central stalk subunits to proton translocation. In terms of biological role, this protein is part of the stalk that links CF(0) to CF(1). It either transmits conformational changes from CF(0) to CF(1) or is implicated in proton conduction. The protein is ATP synthase subunit delta of Chloroherpeton thalassium (strain ATCC 35110 / GB-78).